Consider the following 389-residue polypeptide: GDP-fucose protein O-fucosyltransferase 1 (389 aa).

Positions 1-21 (MRVSKVLTLASFISVCSYSEA) are cleaved as a signal peptide. N-linked (GlcNAc...) asparagine glycosylation is present at asparagine 24. Cysteine 35 and cysteine 37 are joined by a disulfide. 40–43 (RFGN) serves as a coordination point for substrate. Cysteine 119 and cysteine 135 form a disulfide bridge. Residue 238 to 240 (HLR) coordinates substrate. 2 disulfides stabilise this stretch: cysteine 249–cysteine 281 and cysteine 266–cysteine 353. 356-357 (TF) is a substrate binding site.

Belongs to the glycosyltransferase 65 family. As to quaternary structure, monomer.

The protein resides in the endoplasmic reticulum. The catalysed reaction is L-seryl-[protein] + GDP-beta-L-fucose = 3-O-(alpha-L-fucosyl)-L-seryl-[protein] + GDP + H(+). The enzyme catalyses L-threonyl-[protein] + GDP-beta-L-fucose = 3-O-(alpha-L-fucosyl)-L-threonyl-[protein] + GDP + H(+). It functions in the pathway protein modification; protein glycosylation. Its function is as follows. Catalyzes the reaction that attaches fucose through an O-glycosidic linkage to a conserved serine or threonine residue found in the consensus sequence C2-X(4,5)-[S/T]-C3 of EGF domains, where C2 and C3 are the second and third conserved cysteines. Specifically uses GDP-fucose as donor substrate and proper disulfide pairing of the substrate EGF domains is required for fucose transfer. This chain is GDP-fucose protein O-fucosyltransferase 1, found in Caenorhabditis elegans.